The chain runs to 130 residues: Abscisic acid and environmental stress-inducible protein TAS14 (130 aa).

Residues 1–130 (MAQYGNQDQM…KIKDKIPGMH (130 aa)) are disordered. Over residues 27–58 (QGTGTGGMMGGTGTGGMMGGTGGEYGTQGMGT) the composition is skewed to gly residues. 2 stretches are compositionally biased toward basic and acidic residues: residues 61-73 (HHHE…RRSD) and 92-130 (KEKI…PGMH).

Belongs to the plant dehydrin family.

In Solanum lycopersicum (Tomato), this protein is Abscisic acid and environmental stress-inducible protein TAS14 (TAS14).